The chain runs to 239 residues: Pathogenesis-related protein 5 (239 aa).

A signal peptide spans 1–23; that stretch reads MANISSIHILFLVFITSGIAVMA. Intrachain disulfides connect Cys32/Cys238, Cys79/Cys89, Cys94/Cys99, Cys146/Cys228, Cys151/Cys211, Cys159/Cys174, Cys178/Cys187, and Cys188/Cys198.

Belongs to the thaumatin family.

It is found in the secreted. Its subcellular location is the extracellular space. It localises to the apoplast. Partially responsible for acquired pathogen resistance. The sequence is that of Pathogenesis-related protein 5 from Arabidopsis thaliana (Mouse-ear cress).